A 284-amino-acid chain; its full sequence is 2-dehydro-3-deoxyphosphooctonate aldolase (284 aa).

Belongs to the KdsA family.

The protein localises to the cytoplasm. The catalysed reaction is D-arabinose 5-phosphate + phosphoenolpyruvate + H2O = 3-deoxy-alpha-D-manno-2-octulosonate-8-phosphate + phosphate. The protein operates within carbohydrate biosynthesis; 3-deoxy-D-manno-octulosonate biosynthesis; 3-deoxy-D-manno-octulosonate from D-ribulose 5-phosphate: step 2/3. It participates in bacterial outer membrane biogenesis; lipopolysaccharide biosynthesis. In Photobacterium profundum (strain SS9), this protein is 2-dehydro-3-deoxyphosphooctonate aldolase.